Reading from the N-terminus, the 149-residue chain is Endoribonuclease YbeY (149 aa).

Residues His106, His110, and His116 each coordinate Zn(2+).

The protein belongs to the endoribonuclease YbeY family. Zn(2+) serves as cofactor.

The protein localises to the cytoplasm. In terms of biological role, single strand-specific metallo-endoribonuclease involved in late-stage 70S ribosome quality control and in maturation of the 3' terminus of the 16S rRNA. This is Endoribonuclease YbeY from Methylobacillus flagellatus (strain ATCC 51484 / DSM 6875 / VKM B-1610 / KT).